Here is an 854-residue protein sequence, read N- to C-terminus: Probable inactive serine/threonine-protein kinase DDB_G0274821 (854 aa).

The Protein kinase domain maps to 1-266; it reads MPIKESFKRI…WPKLFIHPFF (266 aa). Asn-32 and Asn-106 each carry an N-linked (GlcNAc...) asparagine glycan. The segment at 116–135 is disordered; that stretch reads NNNNNNNNNNNNNNNNNNNN. Residues Asn-163, Asn-279, Asn-283, and Asn-290 are each glycosylated (N-linked (GlcNAc...) asparagine). The interval 289–331 is disordered; it reads LNKSSSSSSSSSSSSSSSSSSSSSSSLSFQQQQQPNNISSPNL. Residues 292–322 are compositionally biased toward low complexity; that stretch reads SSSSSSSSSSSSSSSSSSSSSSSLSFQQQQQ. 3 N-linked (GlcNAc...) asparagine glycosylation sites follow: Asn-325, Asn-347, and Asn-365. Positions 384–408 are disordered; the sequence is IISPNRPSSPPLSSLSSCSSSSSSS. N-linked (GlcNAc...) asparagine glycosylation is present at Asn-414. Residues 425–446 are disordered; it reads NNNNNNNNNNNNNNNNNNNNNN. N-linked (GlcNAc...) asparagine glycosylation is found at Asn-520, Asn-541, and Asn-620. The interval 627–650 is disordered; sequence SSPPPSSSSSSSSPSSPSSTSPSL. The segment covering 633-650 has biased composition (low complexity); it reads SSSSSSSPSSPSSTSPSL. N-linked (GlcNAc...) asparagine glycosylation occurs at Asn-757. The helical transmembrane segment at 770–792 threads the bilayer; sequence HWRVQISFLNILFILITINNNFI.

Belongs to the protein kinase superfamily. Ser/Thr protein kinase family.

It is found in the membrane. The protein is Probable inactive serine/threonine-protein kinase DDB_G0274821 of Dictyostelium discoideum (Social amoeba).